Here is a 204-residue protein sequence, read N- to C-terminus: MLEADNLECVRGERRLFAGLDFKLEGGELLNLQGRNGAGKTSLLRMLIGLLPPEAGEIRWKGKSIKTQGDDFRADLCYLGHLNAIKEELTPLENLLAAAHLADEELSEDDAIDALEQVGLAGREDLACKYLSQGQKRRVALARLVKEKRPLWILDEPFVALDVAAVDWLAGIISGHLQRGGMAVMTTHQQVNIPAGTVRELRLG.

Residues 2-203 (LEADNLECVR…PAGTVRELRL (202 aa)) enclose the ABC transporter domain. Position 34 to 41 (34 to 41 (GRNGAGKT)) interacts with ATP.

It belongs to the ABC transporter superfamily. CcmA exporter (TC 3.A.1.107) family. In terms of assembly, the complex is composed of two ATP-binding proteins (CcmA) and two transmembrane proteins (CcmB).

Its subcellular location is the cell inner membrane. It catalyses the reaction heme b(in) + ATP + H2O = heme b(out) + ADP + phosphate + H(+). Part of the ABC transporter complex CcmAB involved in the biogenesis of c-type cytochromes; once thought to export heme, this seems not to be the case, but its exact role is uncertain. Responsible for energy coupling to the transport system. This Dechloromonas aromatica (strain RCB) protein is Cytochrome c biogenesis ATP-binding export protein CcmA.